The following is a 199-amino-acid chain: V-type ATP synthase subunit E (199 aa).

The protein belongs to the V-ATPase E subunit family.

Produces ATP from ADP in the presence of a proton gradient across the membrane. This chain is V-type ATP synthase subunit E, found in Borreliella afzelii (strain PKo) (Borrelia afzelii).